We begin with the raw amino-acid sequence, 288 residues long: Transmembrane protein 163 (288 aa).

The tract at residues 1–64 is disordered; sequence MEPALGSERR…ESGQFSDGLE (64 aa). Residues 1–87 lie on the Cytoplasmic side of the membrane; that stretch reads MEPALGSERR…HEAQNYRKKA (87 aa). Ser11 is subject to Phosphoserine. Residues 12 to 24 show a composition bias toward pro residues; sequence PPGPGVPRPPPRG. Positions 25 to 42 are enriched in low complexity; sequence HAPSTAAPAPSPAPMSSS. The interval 41–71 is required for interaction with MCOLN1; the sequence is SSVQSDEERQPRISESGQFSDGLEDRGLLES. Phosphoserine is present on residues Ser45, Ser54, Ser56, and Ser60. The helical transmembrane segment at 88 to 108 threads the bilayer; sequence LWVSWLSIIVTLALAVAAFTV. Residues 109 to 115 are Extracellular-facing; that stretch reads SVMRYSA. A helical transmembrane segment spans residues 116-136; sequence SAFGFAFDAILDVLSSAIVLW. At 137–149 the chain is on the cytoplasmic side; sequence RYSNAAAVHSANR. A helical transmembrane segment spans residues 150-170; sequence EYIACVILGVIFLLSSICIVV. Residues 171–186 are Extracellular-facing; that stretch reads KAIHDLSTRLLPEVDD. The chain crosses the membrane as a helical span at residues 187 to 207; the sequence is FLFSVSILSGILCSVLAVLKF. The Cytoplasmic portion of the chain corresponds to 208–216; that stretch reads MLGKVLTSR. A helical membrane pass occupies residues 217–237; that stretch reads ALITDGFNSLVGGVMGFSILL. Over 238-254 the chain is Extracellular; it reads SAEVFKHNAAVWYLDGS. The helical transmembrane segment at 255–275 threads the bilayer; the sequence is IGVLIGLTIFAYGVKLLIDMV. The Cytoplasmic portion of the chain corresponds to 276-288; the sequence is PRVRQTRHYEMFE.

Belongs to the TMEM163 family. Homodimer. Interacts with MCOLN1. Interacts with SLC30A1, SLC30A2, SLC30A3 and SLC30A4. As to expression, widely expressed, with high expression in the brain, cerebellum, heart, lung and spleen. In the brain, mainly expressed in the glutaminergic neuron subpopulations.

It localises to the cytoplasmic vesicle. The protein resides in the secretory vesicle. It is found in the synaptic vesicle membrane. The protein localises to the early endosome membrane. Its subcellular location is the late endosome membrane. It localises to the lysosome membrane. The protein resides in the cell membrane. The enzyme catalyses Zn(2+)(in) = Zn(2+)(out). In terms of biological role, zinc ion transporter that mediates zinc efflux and plays a crucial role in intracellular zinc homeostasis. Binds the divalent cations Zn(2+), Ni(2+), and to a minor extent Cu(2+). Is a functional modulator of P2X purinoceptors, including P2RX1, P2RX3, P2RX4 and P2RX7. Plays a role in central nervous system development and is required for myelination, and survival and proliferation of oligodendrocytes. The chain is Transmembrane protein 163 (Tmem163) from Mus musculus (Mouse).